The following is a 189-amino-acid chain: 3-isopropylmalate dehydratase small subunit (189 aa).

It belongs to the LeuD family. LeuD type 1 subfamily. In terms of assembly, heterodimer of LeuC and LeuD.

The enzyme catalyses (2R,3S)-3-isopropylmalate = (2S)-2-isopropylmalate. Its pathway is amino-acid biosynthesis; L-leucine biosynthesis; L-leucine from 3-methyl-2-oxobutanoate: step 2/4. In terms of biological role, catalyzes the isomerization between 2-isopropylmalate and 3-isopropylmalate, via the formation of 2-isopropylmaleate. The polypeptide is 3-isopropylmalate dehydratase small subunit (Francisella philomiragia subsp. philomiragia (strain ATCC 25017 / CCUG 19701 / FSC 153 / O#319-036)).